Here is a 180-residue protein sequence, read N- to C-terminus: MVGSGIPALGLLLLMQGSADGNGIQGFFYPWSCEGDVWDRESCGGQAAIENPNLCLRLRCCYRDGVCYHQRPDENMRRKHMWALGWTCGGLLFLITSICLFWWARRHDMLRLPWFLKGKCDLSRTVSLLSKDRTPSEKKTPSVGSIPPAAPTEGALDVSGGTEGEGTEGGEETEGGDEDD.

The signal sequence occupies residues 1–21 (MVGSGIPALGLLLLMQGSADG). The Extracellular portion of the chain corresponds to 22–81 (NGIQGFFYPWSCEGDVWDRESCGGQAAIENPNLCLRLRCCYRDGVCYHQRPDENMRRKHM). The region spanning 31-71 (WSCEGDVWDRESCGGQAAIENPNLCLRLRCCYRDGVCYHQR) is the P-type domain. 3 cysteine pairs are disulfide-bonded: Cys-33–Cys-61, Cys-43–Cys-60, and Cys-55–Cys-67. A helical transmembrane segment spans residues 82–102 (WALGWTCGGLLFLITSICLFW). At 103-180 (WARRHDMLRL…EETEGGDEDD (78 aa)) the chain is on the cytoplasmic side. Over residues 131–140 (KDRTPSEKKT) the composition is skewed to basic and acidic residues. A disordered region spans residues 131 to 180 (KDRTPSEKKTPSVGSIPPAAPTEGALDVSGGTEGEGTEGGEETEGGDEDD). Over residues 165–180 (EGTEGGEETEGGDEDD) the composition is skewed to acidic residues.

The protein resides in the membrane. This is Transmembrane protein 190 (TMEM190) from Bos taurus (Bovine).